Here is an 805-residue protein sequence, read N- to C-terminus: Transitional endoplasmic reticulum ATPase (805 aa).

S3 is subject to Phosphoserine. ATP is bound by residues 247–253, N348, H384, and 521–526; these read PGTGKTL and GCGKTL. The disordered stretch occupies residues 768-805; the sequence is FGSFRFPAGGQGGAGPSQGAGGGSGGSHFNEEEDDLYG. Over residues 776-793 the composition is skewed to gly residues; it reads GGQGGAGPSQGAGGGSGG.

This sequence belongs to the AAA ATPase family. In terms of assembly, homohexamer. Forms a ring-shaped particle of 12.5 nm diameter, that displays 6-fold radial symmetry. Interacts with the FACT/DUF complex, which includes subunits ssrp1/duf87 and supt16h/duf140. Phosphorylated.

The protein resides in the cytoplasm. Its subcellular location is the cytosol. It is found in the endoplasmic reticulum. It localises to the nucleus. The protein localises to the stress granule. The enzyme catalyses ATP + H2O = ADP + phosphate + H(+). Its activity is regulated as follows. ATPase activity is inhibited or reduced by lowering pH from 9.0 to 7.0, and by addition of Ca(2+), EDTA, KNO(3) or by treatment with N-ethylmaleimide (NEM). In terms of biological role, necessary for the fragmentation of Golgi stacks during mitosis and for their reassembly after mitosis. Involved in the formation of the nuclear envelope, and of the transitional endoplasmic reticulum (tER). The transfer of membranes from the endoplasmic reticulum to the Golgi apparatus occurs via 50-70 nm transition vesicles which derive from part-rough, part-smooth transitional elements of the endoplasmic reticulum (tER). Vesicle budding from the tER is an ATP-dependent process. Involved in endoplasmic reticulum stress-induced pre-emptive quality control, a mechanism that selectively attenuates the translocation of newly synthesized proteins into the endoplasmic reticulum and reroutes them to the cytosol for proteasomal degradation. Involved in clearance process by mediating G3BP1 extraction from stress granules. Also involved in DNA damage response: recruited to double-strand breaks (DSBs) sites and promotes the recruitment of tp53bp1 at DNA damage sites. Together with sprtn metalloprotease, involved in the repair of covalent DNA-protein cross-links (DPCs) during DNA synthesis. Involved in interstrand cross-link repair in response to replication stress by mediating unloading of the ubiquitinated CMG helicase complex. Enhances cell cycle progression and inhibits apoptosis at low temperatures. Essential for the maturation of ubiquitin-containing autophagosomes and the clearance of ubiquitinated protein by autophagy. Acts as a negative regulator of type I interferon production by promoting ubiquitination of rigi. May play a role in the ubiquitin-dependent sorting of membrane proteins to lysosomes where they undergo degradation. May more particularly play a role in caveolins sorting in cells. By controlling the steady-state expression of the IGF1R receptor, indirectly regulates the insulin-like growth factor receptor signaling pathway. The protein is Transitional endoplasmic reticulum ATPase of Xenopus tropicalis (Western clawed frog).